Reading from the N-terminus, the 146-residue chain is MATPEASGSGRNGQGSDPAVTYYRLEEVAKRNTAEETWMVIHGRVYDITRFLSEHPGGEEVLLEQAGADATESFEDVGHSPDAREMLKQYYIGDVHPNDLKPKDGDKDPSKNNSCQSSWAYWIVPIVGAILIGFLYRHFWADSKSS.

A propeptide spanning residues 1–11 (MATPEASGSGR) is cleaved from the precursor. A Cytochrome b5 heme-binding domain is found at 20–96 (VTYYRLEEVA…LKQYYIGDVH (77 aa)). N6-acetyllysine is present on K30. 2 residues coordinate heme: H55 and H79. The residue at position 80 (S80) is a Phosphoserine. A helical transmembrane segment spans residues 119 to 136 (WAYWIVPIVGAILIGFLY).

It belongs to the cytochrome b5 family. In terms of assembly, component of a complex composed of cytochrome b5, NADH-cytochrome b5 reductase (CYB5R3) and MTARC2.

The protein localises to the mitochondrion outer membrane. Cytochrome b5 is a membrane-bound hemoprotein functioning as an electron carrier for several membrane-bound oxygenases. The sequence is that of Cytochrome b5 type B (Cyb5b) from Rattus norvegicus (Rat).